The chain runs to 152 residues: Transcriptional repressor NrdR (152 aa).

The segment at 3–34 (CPYCNASDTKVIDSRLAAEGAQVRRRRSCNSC) is a zinc-finger region. The ATP-cone domain occupies 49-139 (PRIIKSSGKI…VYRDFQDIDA (91 aa)).

The protein belongs to the NrdR family. Requires Zn(2+) as cofactor.

In terms of biological role, negatively regulates transcription of bacterial ribonucleotide reductase nrd genes and operons by binding to NrdR-boxes. This chain is Transcriptional repressor NrdR, found in Psychrobacter arcticus (strain DSM 17307 / VKM B-2377 / 273-4).